The primary structure comprises 124 residues: Photoactive yellow protein (124 aa).

Residues 22–85 (AESLPFGAVL…GEFLKFNRTG (64 aa)) form the PAS domain. S-(4-hydroxycinnamyl)cysteine is present on Cys-68.

This sequence belongs to the photoactive yellow protein family. In terms of processing, the 4-hydroxycinnamic acid (p-coumaric acid) chromophore is covalently bound via a thioester linkage.

In terms of biological role, this photoactive protein is a photoreceptor with kinetics similar to that of rhodopsin. The chain is Photoactive yellow protein (pyp) from Rhodobacter capsulatus (strain ATCC BAA-309 / NBRC 16581 / SB1003).